The following is a 357-amino-acid chain: 3-isopropylmalate dehydrogenase (357 aa).

Residue 76–89 (GYQWESLDISVRPE) participates in NAD(+) binding. Residues R96, R106, R134, and D224 each coordinate substrate. Mg(2+)-binding residues include D224, D248, and D252. 282 to 294 (GSAPDIAGQNIAN) lines the NAD(+) pocket.

It belongs to the isocitrate and isopropylmalate dehydrogenases family. LeuB type 1 subfamily. As to quaternary structure, homodimer. Requires Mg(2+) as cofactor. It depends on Mn(2+) as a cofactor.

It is found in the cytoplasm. The enzyme catalyses (2R,3S)-3-isopropylmalate + NAD(+) = 4-methyl-2-oxopentanoate + CO2 + NADH. The protein operates within amino-acid biosynthesis; L-leucine biosynthesis; L-leucine from 3-methyl-2-oxobutanoate: step 3/4. In terms of biological role, catalyzes the oxidation of 3-carboxy-2-hydroxy-4-methylpentanoate (3-isopropylmalate) to 3-carboxy-4-methyl-2-oxopentanoate. The product decarboxylates to 4-methyl-2 oxopentanoate. The sequence is that of 3-isopropylmalate dehydrogenase from Hydrogenovibrio crunogenus (strain DSM 25203 / XCL-2) (Thiomicrospira crunogena).